The sequence spans 277 residues: MEMO1 family protein MTH_45 (277 aa).

The protein belongs to the MEMO1 family.

This is MEMO1 family protein MTH_45 from Methanothermobacter thermautotrophicus (strain ATCC 29096 / DSM 1053 / JCM 10044 / NBRC 100330 / Delta H) (Methanobacterium thermoautotrophicum).